The primary structure comprises 641 residues: tRNA 5-methylaminomethyl-2-thiouridine biosynthesis bifunctional protein MnmC (641 aa).

Residues M1–T219 form a tRNA (mnm(5)s(2)U34)-methyltransferase region. The tract at residues I232–V641 is FAD-dependent cmnm(5)s(2)U34 oxidoreductase.

The protein in the N-terminal section; belongs to the methyltransferase superfamily. tRNA (mnm(5)s(2)U34)-methyltransferase family. It in the C-terminal section; belongs to the DAO family. It depends on FAD as a cofactor.

The protein resides in the cytoplasm. It carries out the reaction 5-aminomethyl-2-thiouridine(34) in tRNA + S-adenosyl-L-methionine = 5-methylaminomethyl-2-thiouridine(34) in tRNA + S-adenosyl-L-homocysteine + H(+). Functionally, catalyzes the last two steps in the biosynthesis of 5-methylaminomethyl-2-thiouridine (mnm(5)s(2)U) at the wobble position (U34) in tRNA. Catalyzes the FAD-dependent demodification of cmnm(5)s(2)U34 to nm(5)s(2)U34, followed by the transfer of a methyl group from S-adenosyl-L-methionine to nm(5)s(2)U34, to form mnm(5)s(2)U34. In Shewanella pealeana (strain ATCC 700345 / ANG-SQ1), this protein is tRNA 5-methylaminomethyl-2-thiouridine biosynthesis bifunctional protein MnmC.